Reading from the N-terminus, the 548-residue chain is MNNNQFHELFGSQWPPDQHGGHSSASTMLHQQTMPQTMQLKREPHTEVGVMHNQMGMDITSGSVADSTSPPPGSSEGMFGPISGMFMDKKAANSIRAQIEIIPCKVCGDKSSGVHYGVITCEGCKGFFRRSQSTVVNYQCPRNKACVVDRVNRNRCQYCRLQKCLKLGMSRDAVKFGRMSKKQREKVEDEVRYHKAQMRAQNDAAPDSVYDAQQQTPSSSDQFHGHYNGYPGYASPLSSYGYNNAGPPLTSNMSSIQAQPQAQQPYDYADSTTTYEPKQPGYLDADFIGQVEGDISKVLVKSLAERHANTNPKLEYINEMFSKPQDVSKLLFYNSMTYEEMWLDCADKLTAMIQNIIEFAKLIPGFMKLTQDDQILLLKSGSFELAIVRLSRLIDVNREQVLYGDVVLPIRECVHARDPRDMALVSGIFEAAKSIARLKLTESELALYQSLVLLWPERHGVMGNTEIRCLFNMSMSAMRHEIEANHAPLKGDVTVLDTLLAKIPTFRELSLMHLGALSRFKMTHPHHVFPALYKELFSLDSVLDYTHG.

The segment at 1–27 is disordered; it reads MNNNQFHELFGSQWPPDQHGGHSSAST. The nuclear receptor DNA-binding region spans 101–176; that stretch reads IIPCKVCGDK…LGMSRDAVKF (76 aa). 2 consecutive NR C4-type zinc fingers follow at residues 104–124 and 140–164; these read CKVC…CEGC and CPRN…LQKC. Positions 198-228 are disordered; it reads MRAQNDAAPDSVYDAQQQTPSSSDQFHGHYN. The segment covering 211 to 222 has biased composition (polar residues); it reads DAQQQTPSSSDQ. The NR LBD domain maps to 295–539; the sequence is ISKVLVKSLA…PALYKELFSL (245 aa).

Belongs to the nuclear hormone receptor family. NR1 subfamily.

The protein resides in the nucleus. Functionally, putative receptor whose ligand is not yet known. This is Probable nuclear hormone receptor HR3 (HR3) from Manduca sexta (Tobacco hawkmoth).